We begin with the raw amino-acid sequence, 968 residues long: Protein translocase subunit SecA (968 aa).

ATP-binding positions include glutamine 99, glycine 117 to threonine 121, and aspartate 631.

The protein belongs to the SecA family. Monomer and homodimer. Part of the essential Sec protein translocation apparatus which comprises SecA, SecYEG and auxiliary proteins SecDF. Other proteins may also be involved.

The protein resides in the cell inner membrane. The protein localises to the cytoplasm. It carries out the reaction ATP + H2O + cellular proteinSide 1 = ADP + phosphate + cellular proteinSide 2.. Part of the Sec protein translocase complex. Interacts with the SecYEG preprotein conducting channel. Has a central role in coupling the hydrolysis of ATP to the transfer of proteins into and across the cell membrane, serving as an ATP-driven molecular motor driving the stepwise translocation of polypeptide chains across the membrane. The chain is Protein translocase subunit SecA from Chlamydia muridarum (strain MoPn / Nigg).